Reading from the N-terminus, the 100-residue chain is uncharacterized protein (100 aa).

This is an uncharacterized protein from Acidianus convivator (ATV).